The primary structure comprises 153 residues: 6,7-dimethyl-8-ribityllumazine synthase (153 aa).

5-amino-6-(D-ribitylamino)uracil contacts are provided by residues Phe-23, 57 to 59 (AYE), and 81 to 83 (AVI). 86-87 (AT) contributes to the (2S)-2-hydroxy-3-oxobutyl phosphate binding site. His-89 serves as the catalytic Proton donor. Position 113 (Phe-113) interacts with 5-amino-6-(D-ribitylamino)uracil. Arg-127 contacts (2S)-2-hydroxy-3-oxobutyl phosphate.

Belongs to the DMRL synthase family.

It catalyses the reaction (2S)-2-hydroxy-3-oxobutyl phosphate + 5-amino-6-(D-ribitylamino)uracil = 6,7-dimethyl-8-(1-D-ribityl)lumazine + phosphate + 2 H2O + H(+). Its pathway is cofactor biosynthesis; riboflavin biosynthesis; riboflavin from 2-hydroxy-3-oxobutyl phosphate and 5-amino-6-(D-ribitylamino)uracil: step 1/2. Its function is as follows. Catalyzes the formation of 6,7-dimethyl-8-ribityllumazine by condensation of 5-amino-6-(D-ribitylamino)uracil with 3,4-dihydroxy-2-butanone 4-phosphate. This is the penultimate step in the biosynthesis of riboflavin. This Leptospira borgpetersenii serovar Hardjo-bovis (strain JB197) protein is 6,7-dimethyl-8-ribityllumazine synthase.